Reading from the N-terminus, the 168-residue chain is NADH-quinone oxidoreductase subunit E 2 (168 aa).

Residues cysteine 77, cysteine 82, cysteine 118, and cysteine 122 each coordinate [2Fe-2S] cluster.

Belongs to the complex I 24 kDa subunit family. [2Fe-2S] cluster serves as cofactor.

It carries out the reaction a quinone + NADH + 5 H(+)(in) = a quinol + NAD(+) + 4 H(+)(out). Functionally, NDH-1 shuttles electrons from NADH, via FMN and iron-sulfur (Fe-S) centers, to quinones in the respiratory chain. The immediate electron acceptor for the enzyme in this species is believed to be ubiquinone. Couples the redox reaction to proton translocation (for every two electrons transferred, four hydrogen ions are translocated across the cytoplasmic membrane), and thus conserves the redox energy in a proton gradient. The polypeptide is NADH-quinone oxidoreductase subunit E 2 (nuoE2) (Rhizobium meliloti (strain 1021) (Ensifer meliloti)).